Reading from the N-terminus, the 555-residue chain is TBCC domain-containing protein 1 (555 aa).

In terms of domain architecture, C-CAP/cofactor C-like spans proline 302–leucine 433.

Belongs to the TBCC family.

The protein localises to the cytoplasm. Its subcellular location is the cytoskeleton. It localises to the microtubule organizing center. The protein resides in the centrosome. It is found in the spindle pole. May play a role in the regulation of centrosome and Golgi apparatus positioning. This is TBCC domain-containing protein 1 (TBCCD1) from Gallus gallus (Chicken).